Consider the following 147-residue polypeptide: Cysteine proteinase inhibitor 2 (147 aa).

The first 27 residues, 1-27, serve as a signal peptide directing secretion; that stretch reads MATMLKVSLVLSLLGFLVIAVVTPSAA. The Cystatin domain maps to 87 to 117; sequence LQFSRVVSAQKQVVAGLKYYLRIEVTQPNGS. The short motif at 98–102 is the Secondary area of contact element; sequence QVVAG. The N-linked (GlcNAc...) asparagine glycan is linked to N115.

The protein belongs to the cystatin family. Phytocystatin subfamily.

The protein localises to the secreted. Functionally, specific inhibitor of cysteine proteinases. Probably involved in the regulation of endogenous processes and in defense against pests and pathogens. In Arabidopsis thaliana (Mouse-ear cress), this protein is Cysteine proteinase inhibitor 2 (CYS2).